The primary structure comprises 409 residues: MFDTSAGSVRPAECTGDGRVGLYVCGITPYDATHIGHASTYLAFDTLQRVWLDRGYDVAYVQNVTDVDDPLLERATATGVDWRDLAAEQVELFRTDMEALRILPPDSYVGVTEVVDEVASAVAELVRRGTAYPVATPDAVVAGAQDLYFDVARAGEDGPWALGDESGYDLDTMAALSAERGGDPERPGKRDPLDPLLWRAERAGEPAWDSVVGRGRPGWHIECAVIALRKLDRPVTVQGGGSDLIFPHHEMSAGHAAALTGEDFACVYAHSGMVAYQGEKMSKSLGNLVLVSRLRAAGVDPRAIRLALLAQHYRADWEWTDELLAESVARLAAWDAWAAAADASATAGADAGEPGELVQLVRERLSEDLDTPGAILLLDLRVATGVPATPVELAAVDALLGVRLGSPAA.

Residue Cys25 participates in Zn(2+) binding. L-cysteinyl-5'-AMP contacts are provided by residues 25–28 (CGIT), Thr40, and 63–65 (NVT). Positions 27-37 (ITPYDATHIGH) match the 'HIGH' region motif. The short motif at 179 to 184 (ERGGDP) is the 'ERGGDP' region element. Trp219 provides a ligand contact to L-cysteinyl-5'-AMP. Cys223 is a Zn(2+) binding site. 241-243 (GSD) is an L-cysteinyl-5'-AMP binding site. His248 is a Zn(2+) binding site. Val274 provides a ligand contact to L-cysteinyl-5'-AMP. A 'KMSKS' region motif is present at residues 280–284 (KMSKS).

It belongs to the class-I aminoacyl-tRNA synthetase family. MshC subfamily. In terms of assembly, monomer. Zn(2+) is required as a cofactor.

It catalyses the reaction 1D-myo-inositol 2-amino-2-deoxy-alpha-D-glucopyranoside + L-cysteine + ATP = 1D-myo-inositol 2-(L-cysteinylamino)-2-deoxy-alpha-D-glucopyranoside + AMP + diphosphate + H(+). Its function is as follows. Catalyzes the ATP-dependent condensation of GlcN-Ins and L-cysteine to form L-Cys-GlcN-Ins. This is L-cysteine:1D-myo-inositol 2-amino-2-deoxy-alpha-D-glucopyranoside ligase from Clavibacter sepedonicus (Clavibacter michiganensis subsp. sepedonicus).